A 511-amino-acid polypeptide reads, in one-letter code: ATP synthase subunit alpha (511 aa).

Residue 170 to 177 coordinates ATP; that stretch reads GDRQTGKT.

The protein belongs to the ATPase alpha/beta chains family. As to quaternary structure, F-type ATPases have 2 components, CF(1) - the catalytic core - and CF(0) - the membrane proton channel. CF(1) has five subunits: alpha(3), beta(3), gamma(1), delta(1), epsilon(1). CF(0) has three main subunits: a(1), b(2) and c(9-12). The alpha and beta chains form an alternating ring which encloses part of the gamma chain. CF(1) is attached to CF(0) by a central stalk formed by the gamma and epsilon chains, while a peripheral stalk is formed by the delta and b chains.

Its subcellular location is the cell inner membrane. The enzyme catalyses ATP + H2O + 4 H(+)(in) = ADP + phosphate + 5 H(+)(out). In terms of biological role, produces ATP from ADP in the presence of a proton gradient across the membrane. The alpha chain is a regulatory subunit. This is ATP synthase subunit alpha from Granulibacter bethesdensis (strain ATCC BAA-1260 / CGDNIH1).